A 224-amino-acid chain; its full sequence is Putative N-acetylmannosamine-6-phosphate 2-epimerase (224 aa).

It belongs to the NanE family.

The enzyme catalyses an N-acyl-D-glucosamine 6-phosphate = an N-acyl-D-mannosamine 6-phosphate. The protein operates within amino-sugar metabolism; N-acetylneuraminate degradation; D-fructose 6-phosphate from N-acetylneuraminate: step 3/5. Converts N-acetylmannosamine-6-phosphate (ManNAc-6-P) to N-acetylglucosamine-6-phosphate (GlcNAc-6-P). This is Putative N-acetylmannosamine-6-phosphate 2-epimerase from Staphylococcus carnosus (strain TM300).